Reading from the N-terminus, the 593-residue chain is Transcriptional repressor p66-beta (593 aa).

Position 17 is a phosphoserine (Ser-17). Residues Lys-33, Lys-66, and Lys-97 each participate in a glycyl lysine isopeptide (Lys-Gly) (interchain with G-Cter in SUMO2) cross-link. The segment at 62–123 (ELPTKQDGSG…PERGRLTPSP (62 aa)) is disordered. Composition is skewed to basic and acidic residues over residues 74–100 (GYEE…KENI) and 108–118 (SARRSEPERGR). Residue Thr-120 is modified to Phosphothreonine. A phosphoserine mark is found at Ser-122, Ser-129, Ser-134, and Ser-135. Residues 140-194 (SRMEERLKAANLEMFKGKGIEERQQLIKQLRDELRLEEARLVLLKKLRQSQLQKE) adopt a coiled-coil conformation. Lys-147 participates in a covalent cross-link: Glycyl lysine isopeptide (Lys-Gly) (interchain with G-Cter in SUMO2). Residues 165–195 (LIKQLRDELRLEEARLVLLKKLRQSQLQKEN) are CR1; interaction with MBD2 and MBD3. Lys-199 is covalently cross-linked (Glycyl lysine isopeptide (Lys-Gly) (interchain with G-Cter in SUMO2)). Ser-208 is subject to Phosphoserine. The interval 213–235 (SPAHVGQQGLSKLPSRPGAQGVE) is disordered. Lys-281 participates in a covalent cross-link: Glycyl lysine isopeptide (Lys-Gly) (interchain with G-Cter in SUMO2). Ser-333, Ser-338, and Ser-340 each carry phosphoserine. Positions 340 to 480 (SAMTDAANSQ…QEQEIEQRLQ (141 aa)) are CR2; histone tail-binding. Glycyl lysine isopeptide (Lys-Gly) (interchain with G-Cter in SUMO2) cross-links involve residues Lys-353, Lys-454, and Lys-467. The GATA-type zinc-finger motif lies at 414–467 (RVEPFVCAQCRTDFTPHWKQEKNGKILCEQCMTSNQKKALKAEHTNRLKNAFVK). Residues 449 to 482 (QKKALKAEHTNRLKNAFVKALQQEQEIEQRLQQQ) are a coiled coil. Position 486 is a phosphoserine (Ser-486). Lys-498 is covalently cross-linked (Glycyl lysine isopeptide (Lys-Gly) (interchain with G-Cter in SUMO2)).

As to quaternary structure, homooligomer. Component of the nucleosome remodeling and deacetylase (NuRD) repressor complex, composed of core proteins MTA1, MTA2, MTA3, RBBP4, RBBP7, HDAC1, HDAC2, MBD2, MBD3, and peripherally associated proteins CDK2AP1, CDK2AP2, GATAD2A, GATAD2B, CHD3, CHD4 and CHD5. The exact stoichiometry of the NuRD complex is unknown, and some subunits such as MBD2 and MBD3, GATAD2A and GATAD2B, and CHD3, CHD4 and CHD5 define mutually exclusive NuRD complexes. Interacts with MBD2; this is required for the enhancement of MBD2-mediated repression and for targeting to the chromatin. Interacts with MBD3. Component of the MeCP1 histone deacetylase complex. Interacts with histone tails, including that of histones H2A, H2B, H3 and H4. Interacts with ERCC6. As to expression, widely expressed.

Its subcellular location is the nucleus speckle. The protein localises to the nucleus. The protein resides in the chromosome. Functionally, transcriptional repressor. Acts as a component of the histone deacetylase NuRD complex which participates in the remodeling of chromatin. Enhances MBD2-mediated repression. Efficient repression requires the presence of GATAD2A. Targets MBD3 to discrete loci in the nucleus. May play a role in synapse development. This chain is Transcriptional repressor p66-beta (GATAD2B), found in Homo sapiens (Human).